The sequence spans 694 residues: DNA-directed RNA polymerase subunit beta' (694 aa).

Zn(2+) contacts are provided by Cys69, Cys71, Cys87, and Cys90. Positions 489, 491, and 493 each coordinate Mg(2+).

Belongs to the RNA polymerase beta' chain family. RpoC1 subfamily. In plastids the minimal PEP RNA polymerase catalytic core is composed of four subunits: alpha, beta, beta', and beta''. When a (nuclear-encoded) sigma factor is associated with the core the holoenzyme is formed, which can initiate transcription. Requires Mg(2+) as cofactor. Zn(2+) is required as a cofactor.

The protein localises to the plastid. It is found in the chloroplast. It catalyses the reaction RNA(n) + a ribonucleoside 5'-triphosphate = RNA(n+1) + diphosphate. Functionally, DNA-dependent RNA polymerase catalyzes the transcription of DNA into RNA using the four ribonucleoside triphosphates as substrates. This chain is DNA-directed RNA polymerase subunit beta', found in Gossypium barbadense (Sea Island cotton).